The following is a 258-amino-acid chain: UPF0246 protein mma_1385 (258 aa).

Belongs to the UPF0246 family.

The sequence is that of UPF0246 protein mma_1385 from Janthinobacterium sp. (strain Marseille) (Minibacterium massiliensis).